Consider the following 238-residue polypeptide: Ribonuclease PH (238 aa).

Residues Arg86 and 124–126 (GTR) each bind phosphate.

Belongs to the RNase PH family. As to quaternary structure, homohexameric ring arranged as a trimer of dimers.

It carries out the reaction tRNA(n+1) + phosphate = tRNA(n) + a ribonucleoside 5'-diphosphate. In terms of biological role, phosphorolytic 3'-5' exoribonuclease that plays an important role in tRNA 3'-end maturation. Removes nucleotide residues following the 3'-CCA terminus of tRNAs; can also add nucleotides to the ends of RNA molecules by using nucleoside diphosphates as substrates, but this may not be physiologically important. Probably plays a role in initiation of 16S rRNA degradation (leading to ribosome degradation) during starvation. In Haemophilus influenzae (strain PittGG), this protein is Ribonuclease PH.